The primary structure comprises 299 residues: Tetrahydromethanopterin S-methyltransferase subunit E (299 aa).

6 helical membrane passes run 57–79 (AISGEPVSYGLYVAVAGTIAWAL), 95–115 (GVAAVVHGAYSVSAFLGRTVG), 133–153 (IGPIVGHGFIAVFTMTLAAYL), 158–178 (LGNPFPLPLVALIFGITVGAI), 237–257 (GLCFGLIIFLDGWRSILGNII), and 262–282 (VTKTSIALLVGLLVVAVAAGI).

The protein belongs to the MtrE family. In terms of assembly, the complex is composed of 8 subunits; MtrA, MtrB, MtrC, MtrD, MtrE, MtrF, MtrG and MtrH.

The protein localises to the cell membrane. The catalysed reaction is 5-methyl-5,6,7,8-tetrahydromethanopterin + coenzyme M + 2 Na(+)(in) = 5,6,7,8-tetrahydromethanopterin + methyl-coenzyme M + 2 Na(+)(out). It participates in one-carbon metabolism; methanogenesis from CO(2); methyl-coenzyme M from 5,10-methylene-5,6,7,8-tetrahydromethanopterin: step 2/2. In terms of biological role, part of a complex that catalyzes the formation of methyl-coenzyme M and tetrahydromethanopterin from coenzyme M and methyl-tetrahydromethanopterin. This is an energy-conserving, sodium-ion translocating step. This Methanococcus maripaludis (strain C5 / ATCC BAA-1333) protein is Tetrahydromethanopterin S-methyltransferase subunit E.